We begin with the raw amino-acid sequence, 297 residues long: uncharacterized protein (297 aa).

This is an uncharacterized protein from Escherichia coli O157:H7.